Consider the following 466-residue polypeptide: Cysteine--tRNA ligase (466 aa).

Residue C33 participates in Zn(2+) binding. A 'HIGH' region motif is present at residues 35–45 (PTVYDFAHIGN). 3 residues coordinate Zn(2+): C221, H246, and E250. A 'KMSKS' region motif is present at residues 279–283 (KMSKS). K282 is a binding site for ATP.

This sequence belongs to the class-I aminoacyl-tRNA synthetase family. In terms of assembly, monomer. Requires Zn(2+) as cofactor.

The protein localises to the cytoplasm. The enzyme catalyses tRNA(Cys) + L-cysteine + ATP = L-cysteinyl-tRNA(Cys) + AMP + diphosphate. In Sinorhizobium medicae (strain WSM419) (Ensifer medicae), this protein is Cysteine--tRNA ligase.